The primary structure comprises 1108 residues: Retinal guanylyl cyclase 1 (1108 aa).

Positions 1–54 (MSAWLLPAGGFPGAGFCIPAWQSRSSLSRVLRWPGPGLPGLLLLLLLPSPSAFS) are cleaved as a signal peptide. The Extracellular segment spans residues 55-465 (AVFKVGVLGP…PDVICNGGVE (411 aa)). The cysteines at positions 108 and 136 are disulfide-linked. A glycan (N-linked (GlcNAc...) asparagine) is linked at N300. Residues 466 to 490 (PGLVFVGFLLVIVVGLTGAFLAHYL) form a helical membrane-spanning segment. Over 491 to 1108 (RHRLLHMQMV…KARPGQFTGK (618 aa)) the chain is Cytoplasmic. Residues 520 to 552 (GGSSRKVAQGSRSSLATRSTSDIRSVPSQPQES) form a disordered region. Residues 520 to 811 (GGSSRKVAQG…DLTFDLFKGI (292 aa)) enclose the Protein kinase domain. Residues 529–552 (GSRSSLATRSTSDIRSVPSQPQES) are compositionally biased toward polar residues. A Guanylate cyclase domain is found at 883–1013 (TLYFSDIVGF…DTVNTASRME (131 aa)). Positions 1069 to 1108 (IPKPPDLQPGASNHGISLQEIPPERRKKLEKARPGQFTGK) are disordered.

This sequence belongs to the adenylyl cyclase class-4/guanylyl cyclase family. Homodimer; requires homodimerization for guanylyl cyclase activity. Interacts (via C-terminus) with RD3 (via C-terminus); promotes the exit of GUCY2E from the endoplasmic reticulum and its trafficking to the photoreceptor outer segments. Interaction with RD3 negatively regulates GUCY2E guanylate cyclase activity. Post-translationally, there are 9 conserved cysteine residues in sensory guanylate cyclases, 6 in the extracellular domain, which may be involved in intra- or interchain disulfide bonds. In terms of tissue distribution, expressed in retina and enriched in photoreceptor outer segments.

It localises to the membrane. It is found in the photoreceptor outer segment membrane. The protein resides in the endoplasmic reticulum membrane. It carries out the reaction GTP = 3',5'-cyclic GMP + diphosphate. Activated by GUCA1A when free calcium ions concentration is low, and inhibited by GUCA1A when free calcium ions concentration is high. Negatively regulated by RD3; inhibits the basal and GUCA1A-stimulated guanylate cyclase activity. Catalyzes the synthesis of cyclic GMP (cGMP) in rods and cones of photoreceptors. Plays an essential role in phototransduction, by mediating cGMP replenishment. May also participate in the trafficking of membrane-asociated proteins to the photoreceptor outer segment membrane. This chain is Retinal guanylyl cyclase 1 (Gucy2e), found in Rattus norvegicus (Rat).